Here is a 182-residue protein sequence, read N- to C-terminus: Large ribosomal subunit protein uL6 (182 aa).

Belongs to the universal ribosomal protein uL6 family. Part of the 50S ribosomal subunit.

Functionally, this protein binds to the 23S rRNA, and is important in its secondary structure. It is located near the subunit interface in the base of the L7/L12 stalk, and near the tRNA binding site of the peptidyltransferase center. This is Large ribosomal subunit protein uL6 from Caldicellulosiruptor bescii (strain ATCC BAA-1888 / DSM 6725 / KCTC 15123 / Z-1320) (Anaerocellum thermophilum).